Consider the following 341-residue polypeptide: 3-keto-steroid reductase/17-beta-hydroxysteroid dehydrogenase 7 (341 aa).

At 1–229 (MRKVVLITGA…VACPGTALTN (229 aa)) the chain is on the extracellular side. An NAD(+)-binding site is contributed by 8–15 (TGASSGIG). N-linked (GlcNAc...) asparagine glycosylation is present at asparagine 37. Serine 171 is a binding site for substrate. Asparagine 178 is a glycosylation site (N-linked (GlcNAc...) asparagine). The Proton acceptor role is filled by tyrosine 193. Asparagine 229 carries N-linked (GlcNAc...) asparagine glycosylation. Residues 230 to 250 (LTYGILPPFIWTLLMPAILLL) form a helical membrane-spanning segment. Over 251–341 (RFFANAFTLT…NQARLSGSCL (91 aa)) the chain is Cytoplasmic.

Belongs to the short-chain dehydrogenases/reductases (SDR) family. ERG27 subfamily. As to quaternary structure, binds to the short form of prolactin receptor. Post-translationally, phosphorylated. In terms of tissue distribution, highly expressed in adrenal gland, liver, lung and thymus. Expressed in breast, ovaries, pituitary gland, pregnant uterus, prostate, kidney, lymph node, small intestine, spinal cord and trachea. Weakly expressed in all other tissues tested. As to expression, expressed in eye ciliary epithelial cells and neuroendocrine cells.

Its subcellular location is the endoplasmic reticulum membrane. It catalyses the reaction 17beta-estradiol + NADP(+) = estrone + NADPH + H(+). The enzyme catalyses a 3beta-hydroxysteroid + NADP(+) = a 3-oxosteroid + NADPH + H(+). The catalysed reaction is 3-dehydro-4alpha-methylzymosterol + NADPH + H(+) = 4alpha-methylzymosterol + NADP(+). It carries out the reaction zymosterone + NADPH + H(+) = zymosterol + NADP(+). It catalyses the reaction 4alpha-methyl-5alpha-cholest-8-en-3-one + NADPH + H(+) = 4alpha-methyl-5alpha-cholest-8-en-3beta-ol + NADP(+). The enzyme catalyses 4alpha-methyl-5alpha-cholest-7-en-3beta-ol + NADP(+) = 4alpha-methyl-5alpha-cholest-7-en-3-one + NADPH + H(+). The catalysed reaction is 5alpha-cholest-8-en-3-one + NADPH + H(+) = 5alpha-cholest-8-en-3beta-ol + NADP(+). It carries out the reaction 5alpha-androstane-3beta,17beta-diol + NADP(+) = 17beta-hydroxy-5alpha-androstan-3-one + NADPH + H(+). It catalyses the reaction progesterone + NADPH + H(+) = 3beta-hydroxypregn-4-ene-20-one + NADP(+). It participates in steroid biosynthesis; estrogen biosynthesis. Its pathway is steroid biosynthesis; zymosterol biosynthesis; zymosterol from lanosterol: step 5/6. Estradiol 17-beta-dehydrogenase and dihydrotestosterone oxidoreductase activities are selectively inhibited by 4-methyl-4-aza-5alpha-androstane derivatives, such as 17beta-[(N-Heptyl)methylamino]-4-aza-5r-androstan-3-one and 17beta-(N-Decylformamido)-4-aza-5r-androstan-3-one. Bifunctional enzyme involved in steroid-hormone metabolism and cholesterol biosynthesis. Catalyzes the NADP(H)-dependent reduction of estrogens and androgens and regulates the biological potency of these steroids. Converts estrone (E1) to a more potent estrogen, 17beta-estradiol (E2). Converts dihydrotestosterone (DHT) to its inactive form 5a-androstane-3b,17b-diol. Converts moderately progesterone to 3beta-hydroxypregn-4-ene-20-one, leading to its inactivation. Additionally, participates in the post-squalene cholesterol biosynthesis, as a 3-ketosteroid reductase. Functionally, does not have enzymatic activities toward E1 and DHT. The chain is 3-keto-steroid reductase/17-beta-hydroxysteroid dehydrogenase 7 (HSD17B7) from Homo sapiens (Human).